The following is a 292-amino-acid chain: 4-hydroxy-tetrahydrodipicolinate synthase (292 aa).

T45 serves as a coordination point for pyruvate. The active-site Proton donor/acceptor is Y133. K161 acts as the Schiff-base intermediate with substrate in catalysis. Position 203 (I203) interacts with pyruvate.

It belongs to the DapA family. As to quaternary structure, homodimer.

Its subcellular location is the cytoplasm. The enzyme catalyses L-aspartate 4-semialdehyde + pyruvate = (2S,4S)-4-hydroxy-2,3,4,5-tetrahydrodipicolinate + H2O + H(+). It participates in amino-acid biosynthesis; L-lysine biosynthesis via DAP pathway; (S)-tetrahydrodipicolinate from L-aspartate: step 3/4. Catalyzes the condensation of (S)-aspartate-beta-semialdehyde [(S)-ASA] and pyruvate to 4-hydroxy-tetrahydrodipicolinate (HTPA). The polypeptide is 4-hydroxy-tetrahydrodipicolinate synthase (Pseudomonas putida (strain W619)).